Here is a 213-residue protein sequence, read N- to C-terminus: Protein-L-isoaspartate O-methyltransferase (213 aa).

S61 is an active-site residue.

The protein belongs to the methyltransferase superfamily. L-isoaspartyl/D-aspartyl protein methyltransferase family.

The protein resides in the cytoplasm. The catalysed reaction is [protein]-L-isoaspartate + S-adenosyl-L-methionine = [protein]-L-isoaspartate alpha-methyl ester + S-adenosyl-L-homocysteine. In terms of biological role, catalyzes the methyl esterification of L-isoaspartyl residues in peptides and proteins that result from spontaneous decomposition of normal L-aspartyl and L-asparaginyl residues. It plays a role in the repair and/or degradation of damaged proteins. The sequence is that of Protein-L-isoaspartate O-methyltransferase from Maricaulis maris (strain MCS10) (Caulobacter maris).